A 130-amino-acid chain; its full sequence is Small ribosomal subunit protein uS11 (130 aa).

Belongs to the universal ribosomal protein uS11 family. As to quaternary structure, part of the 30S ribosomal subunit. Interacts with proteins S7 and S18. Binds to IF-3.

In terms of biological role, located on the platform of the 30S subunit, it bridges several disparate RNA helices of the 16S rRNA. Forms part of the Shine-Dalgarno cleft in the 70S ribosome. This Gluconacetobacter diazotrophicus (strain ATCC 49037 / DSM 5601 / CCUG 37298 / CIP 103539 / LMG 7603 / PAl5) protein is Small ribosomal subunit protein uS11.